Reading from the N-terminus, the 199-residue chain is MNIEKTLSVQKREGYGKGPSGRLRAQKLIPGVFYTPKGENISVQAPALPLQKIYEEMGHTTVFNLEIEENGQKTAYPVLIWQVQFHPYKRAFTHIDFYGVDLDKEVTVDVPVEFVGTSRGVKLGGVLETYREMVRLTSKPLNMPQKITVDVTDMGINDTISVGDLKLPENVRAEFDQNYALVTVISKSKDDAEEEGDED.

The segment at 1–21 (MNIEKTLSVQKREGYGKGPSG) is disordered.

This sequence belongs to the bacterial ribosomal protein bL25 family. CTC subfamily. Part of the 50S ribosomal subunit; part of the 5S rRNA/L5/L18/L25 subcomplex. Contacts the 5S rRNA. Binds to the 5S rRNA independently of L5 and L18.

Its function is as follows. This is one of the proteins that binds to the 5S RNA in the ribosome where it forms part of the central protuberance. In Desulfovibrio desulfuricans (strain ATCC 27774 / DSM 6949 / MB), this protein is Large ribosomal subunit protein bL25.